Consider the following 68-residue polypeptide: Beta-defensin 1 (68 aa).

The N-terminal stretch at 1–21 (MRTSYLLLFTLCLLMSEMASG) is a signal peptide. Residues 22-32 (DNFLTGLGHRS) constitute a propeptide that is removed on maturation. Intrachain disulfides connect cysteine 37/cysteine 66, cysteine 44/cysteine 59, and cysteine 49/cysteine 67.

The protein belongs to the beta-defensin family. As to quaternary structure, monomer. Homodimer.

It localises to the secreted. Its subcellular location is the membrane. Has bactericidal activity. May act as a ligand for C-C chemokine receptor CCR6. Positively regulates the sperm motility and bactericidal activity in a CCR6-dependent manner. Binds to CCR6 and triggers Ca2+ mobilization in the sperm which is important for its motility. The chain is Beta-defensin 1 (DEFB1) from Presbytis melalophos (Mitred leaf monkey).